The chain runs to 309 residues: Ribokinase (309 aa).

Residues 14–16 (NAD), 42–46 (GKGAN), and glutamate 143 contribute to the substrate site. ATP is bound by residues asparagine 187 and 223-228 (TLGSRG). 2 residues coordinate K(+): aspartate 249 and isoleucine 251. ATP contacts are provided by residues 254–255 (GD) and histidine 279. Residue aspartate 255 participates in substrate binding. Aspartate 255 acts as the Proton acceptor in catalysis. Residues alanine 285, arginine 288, glycine 290, and serine 294 each contribute to the K(+) site.

The protein belongs to the carbohydrate kinase PfkB family. Ribokinase subfamily. In terms of assembly, homodimer. It depends on Mg(2+) as a cofactor.

Its subcellular location is the cytoplasm. It carries out the reaction D-ribose + ATP = D-ribose 5-phosphate + ADP + H(+). The protein operates within carbohydrate metabolism; D-ribose degradation; D-ribose 5-phosphate from beta-D-ribopyranose: step 2/2. With respect to regulation, activated by a monovalent cation that binds near, but not in, the active site. The most likely occupant of the site in vivo is potassium. Ion binding induces a conformational change that may alter substrate affinity. Functionally, catalyzes the phosphorylation of ribose at O-5 in a reaction requiring ATP and magnesium. The resulting D-ribose-5-phosphate can then be used either for sythesis of nucleotides, histidine, and tryptophan, or as a component of the pentose phosphate pathway. The chain is Ribokinase from Escherichia coli O157:H7.